Consider the following 357-residue polypeptide: Non-structural protein NS2 (357 aa).

2 disordered regions span residues 162–199 and 228–268; these read QNERESAPRLQVQSVSPREESRWMDDDEAKVDEEAKEM and LDEK…KTHI. Composition is skewed to acidic residues over residues 230–243 and 250–260; these read EKDEEDRDEREDEE and DDDEQGEDASD.

Belongs to the orbivirus non-structural protein NS2 family.

In terms of biological role, single-stranded RNA-binding protein. The sequence is that of Non-structural protein NS2 (Segment-8) from Antilocapra americana (Pronghorn).